Here is a 1031-residue protein sequence, read N- to C-terminus: Probable ATP-dependent RNA helicase DDX46 (1031 aa).

A compositionally biased stretch (basic residues) spans 1-24 (MGRESRHYRKRSASRGRSGSRSRS). The segment at 1–228 (MGRESRHYRK…EMEGEELDPL (228 aa)) is disordered. Residue G2 is the site of N-myristoyl glycine attachment. The span at 26 to 49 (SPSDKRSKRGDDRRSRSRDRDRRR) shows a compositional bias: basic and acidic residues. Basic residues-rich tracts occupy residues 50–73 (ERSRSRDKRRSRSRDRKRLRRSRS) and 81–103 (ERRRSRSRDRRRSRSRSRGRRSR). Residues 112–200 (KKTENRSRSK…EMKQGKKWSL (89 aa)) are compositionally biased toward basic and acidic residues. A coiled-coil region spans residues 152–197 (DQNKLEEEMRKRKERVEKWREEQRKKAMENIGELKKEIEEMKQGKK). Residue K186 forms a Glycyl lysine isopeptide (Lys-Gly) (interchain with G-Cter in SUMO2) linkage. S199 carries the phosphoserine modification. 2 stretches are compositionally biased toward acidic residues: residues 201 to 211 (EDDDDDEDDPA) and 219 to 228 (EMEGEELDPL). K263 is subject to N6-acetyllysine. Y294 bears the Phosphotyrosine mark. S295 and S296 each carry phosphoserine. A Glycyl lysine isopeptide (Lys-Gly) (interchain with G-Cter in SUMO2) cross-link involves residue K325. Residue S346 is modified to Phosphoserine. The short motif at 372 to 400 (KSWVQCGISMKILNSLKKHGYEKPTPIQT) is the Q motif element. A Helicase ATP-binding domain is found at 403–581 (IPAIMSGRDL…RRILSKPIEV (179 aa)). ATP is bound at residue 416–423 (AKTGSGKT). The short motif at 529-532 (DEAD) is the DEAD box element. One can recognise a Helicase C-terminal domain in the interval 592-753 (DVEQQVIVIE…AVPPDLEKLW (162 aa)). Residue K776 is modified to N6-acetyllysine. K779 is covalently cross-linked (Glycyl lysine isopeptide (Lys-Gly) (interchain with G-Cter in SUMO2)). S804 bears the Phosphoserine mark. K903 carries the N6-acetyllysine modification. Glycyl lysine isopeptide (Lys-Gly) (interchain with G-Cter in SUMO2) cross-links involve residues K907 and K915. Residue S928 is modified to Phosphoserine.

The protein belongs to the DEAD box helicase family. DDX46/PRP5 subfamily. Component of the 17S U2 SnRNP complex, a ribonucleoprotein complex that contains small nuclear RNA (snRNA) U2 and a number of specific proteins. Within the 17S U2 SnRNP complex, DDX46 is part of the SF3B subcomplex, which is required for 'A' complex assembly formed by the stable binding of U2 snRNP to the branchpoint sequence in pre-mRNA. Recruited to the 17S U2 SnRNP complex following release of DDX42; DDX42 and DDX46 bind the SF3B subcomplex in a competitive manner.

The protein localises to the nucleus speckle. It is found in the nucleus. Its subcellular location is the cajal body. The catalysed reaction is ATP + H2O = ADP + phosphate + H(+). In terms of biological role, component of the 17S U2 SnRNP complex of the spliceosome, a large ribonucleoprotein complex that removes introns from transcribed pre-mRNAs. The 17S U2 SnRNP complex (1) directly participates in early spliceosome assembly and (2) mediates recognition of the intron branch site during pre-mRNA splicing by promoting the selection of the pre-mRNA branch-site adenosine, the nucleophile for the first step of splicing. Within the 17S U2 SnRNP complex, DDX46 plays essential roles during assembly of pre-spliceosome and proofreading of the branch site. The chain is Probable ATP-dependent RNA helicase DDX46 from Homo sapiens (Human).